The sequence spans 299 residues: Protein PRY1 (299 aa).

A signal peptide spans 1 to 19; sequence MKLSKLSILTSALATSALA. The interval 103–157 is disordered; it reads TDSTTTLTSSESTSQSLAQATTTSTPAAASTTSTPAATTTTSQAAATSSASSSDS. In terms of domain architecture, SCP spans 167–281; that stretch reads LAEHNKKRAL…AWGDYVICSY (115 aa).

Belongs to the CRISP family. Post-translationally, O-glycosylated.

It is found in the secreted. Secreted protein required for efficient export of lipids such as acetylated sterols. Acts in detoxification of hydrophobic compounds. This is Protein PRY1 from Saccharomyces cerevisiae (strain ATCC 204508 / S288c) (Baker's yeast).